The sequence spans 1400 residues: DNA-directed RNA polymerase subunit beta' (1400 aa).

Positions 70, 72, 85, and 88 each coordinate Zn(2+). 3 residues coordinate Mg(2+): D460, D462, and D464. C814, C889, C896, and C899 together coordinate Zn(2+).

This sequence belongs to the RNA polymerase beta' chain family. In terms of assembly, the RNAP catalytic core consists of 2 alpha, 1 beta, 1 beta' and 1 omega subunit. When a sigma factor is associated with the core the holoenzyme is formed, which can initiate transcription. Mg(2+) is required as a cofactor. Zn(2+) serves as cofactor.

It carries out the reaction RNA(n) + a ribonucleoside 5'-triphosphate = RNA(n+1) + diphosphate. Functionally, DNA-dependent RNA polymerase catalyzes the transcription of DNA into RNA using the four ribonucleoside triphosphates as substrates. This is DNA-directed RNA polymerase subunit beta' from Alcanivorax borkumensis (strain ATCC 700651 / DSM 11573 / NCIMB 13689 / SK2).